The following is a 221-amino-acid chain: Ribonuclease T (221 aa).

One can recognise an Exonuclease domain in the interval Val-20–Phe-194. Residues Asp-23, Glu-25, His-181, and Asp-186 each coordinate Mg(2+). His-181 (proton donor/acceptor) is an active-site residue.

The protein belongs to the RNase T family. As to quaternary structure, homodimer. Mg(2+) is required as a cofactor.

Its function is as follows. Trims short 3' overhangs of a variety of RNA species, leaving a one or two nucleotide 3' overhang. Responsible for the end-turnover of tRNA: specifically removes the terminal AMP residue from uncharged tRNA (tRNA-C-C-A). Also appears to be involved in tRNA biosynthesis. This is Ribonuclease T from Buchnera aphidicola subsp. Acyrthosiphon pisum (strain APS) (Acyrthosiphon pisum symbiotic bacterium).